The following is a 278-amino-acid chain: TIMELESS-interacting protein (278 aa).

Residues 1 to 59 (MLEQEENGLFEIPDYEHVEDETFPPFPPPASPERDPADAEPEEGSGSGVPVPPKRTVKR) are disordered. The interval 64–140 (LDATRLTSER…KEVQTCLKRI (77 aa)) is interaction with TIMELESS. 2 disordered regions span residues 155–197 (NDEV…EEQQ) and 216–278 (LSNS…TNLD). Ser191 and Ser219 each carry phosphoserine. Over residues 226–239 (VTVEENSTGEDQEE) the composition is skewed to acidic residues. Thr233 carries the post-translational modification Phosphothreonine. Residues 259 to 278 (THEEEQCKAEETQLDHTNLD) are compositionally biased toward basic and acidic residues.

Belongs to the CSM3 family. As to quaternary structure, interacts with MCM6 and MCM7. Interacts with TIMELESS (via N-terminus), which impairs TIMELESS self-association. Interacts with RPA2 and PRDX2. Expressed in brain.

It is found in the cytoplasm. The protein localises to the nucleus. Its function is as follows. Plays an important role in the control of DNA replication and the maintenance of replication fork stability. Important for cell survival after DNA damage or replication stress. May be specifically required for the ATR-CHEK1 pathway in the replication checkpoint induced by hydroxyurea or ultraviolet light. Forms a complex with TIMELESS and this complex regulates DNA replication processes under both normal and stress conditions, stabilizes replication forks and influences both CHEK1 phosphorylation and the intra-S phase checkpoint in response to genotoxic stress. The protein is TIMELESS-interacting protein (Tipin) of Mus musculus (Mouse).